The chain runs to 190 residues: Putative 3-methyladenine DNA glycosylase (190 aa).

This sequence belongs to the DNA glycosylase MPG family.

The chain is Putative 3-methyladenine DNA glycosylase from Chlamydia abortus (strain DSM 27085 / S26/3) (Chlamydophila abortus).